The sequence spans 69 residues: Neurotoxin Cex7 (69 aa).

A signal peptide is located at residue A1. Residues 2 to 67 form the LCN-type CS-alpha/beta domain; it reads REGYLVSKST…TYPIPGKSCG (66 aa). Intrachain disulfides connect C13/C66, C17/C42, C26/C47, and C30/C49. C66 bears the Cysteine amide mark. The propeptide occupies 67-69; the sequence is GKK.

It belongs to the long (4 C-C) scorpion toxin superfamily. Sodium channel inhibitor family. Beta subfamily. Expressed by the venom gland.

Its subcellular location is the secreted. Its function is as follows. Beta toxins bind voltage-independently at site-4 of sodium channels (Nav) and shift the voltage of activation toward more negative potentials thereby affecting sodium channel activation and promoting spontaneous and repetitive firing. This chain is Neurotoxin Cex7, found in Centruroides exilicauda (Bark scorpion).